Consider the following 883-residue polypeptide: Mitogen-activated protein kinase kinase kinase YODA (883 aa).

3 disordered regions span residues 28-193 (GFAS…AEMF), 303-364 (CSPE…PPLL), and 376-396 (SAAT…TVSP). Low complexity predominate over residues 57-72 (SRLPSRSPSPSTRVSR). Polar residues predominate over residues 94–105 (VTSTDSGMNGSQ). Positions 143–165 (SVSSGSSVGDIPSDSLLSPLASD) are enriched in low complexity. 2 stretches are compositionally biased toward polar residues: residues 167-189 (ENGN…NKNS) and 314-328 (RMTS…QSGA). Residues 400–656 (WKKGRLLGMG…AAQLLDHAFV (257 aa)) enclose the Protein kinase domain. ATP-binding positions include 406–414 (LGMGSFGHV) and Lys429. Catalysis depends on Asp525, which acts as the Proton acceptor. Disordered stretches follow at residues 712–773 (GSGF…GAIP) and 787–838 (EGIG…IQPG). Over residues 733 to 756 (SPIFHSHSPHISGRRSPSPISSPH) the composition is skewed to low complexity.

Belongs to the protein kinase superfamily. STE Ser/Thr protein kinase family. MAP kinase kinase kinase subfamily. In terms of assembly, interacts with ASK7. Interacts with BSK12/SSP. Binds to BASL and MPK6. In terms of tissue distribution, expressed in roots, leaves, guard cells, stems, flowers and siliques.

The protein resides in the cytoplasm. It localises to the cell cortex. Its subcellular location is the cell membrane. It catalyses the reaction L-seryl-[protein] + ATP = O-phospho-L-seryl-[protein] + ADP + H(+). The enzyme catalyses L-threonyl-[protein] + ATP = O-phospho-L-threonyl-[protein] + ADP + H(+). With respect to regulation, contains an N-terminal autoinhibitory domain. Functions in a MAP kinase cascade that acts as a molecular switch to regulate the first cell fate decisions in the zygote and the early embryo. Promotes elongation of the zygote and development of its basal daughter cell into the extra-embryonic suspensor. In stomatal development, acts downstream of the LRR receptor TMM, but upstream of the MKK4/MKK5-MPK3/MPK6 module to regulate stomatal cell fate before the guard mother cell (GMC) is specified. Plays a central role in both guard cell identity and pattern formation. This MAPK cascade also functions downstream of the ER receptor in regulating coordinated local cell proliferation, which shapes the morphology of plant organs. Upon brassinosteroid signaling, is inhibited by phosphorylation of its auto-inhibitory N-terminal domain by the GSK3-like kinase ASK7. This is Mitogen-activated protein kinase kinase kinase YODA from Arabidopsis thaliana (Mouse-ear cress).